Consider the following 651-residue polypeptide: Acetyl-coenzyme A synthetase (651 aa).

CoA-binding positions include 189-192, threonine 311, and asparagine 335; that span reads RGGK. Residues 387–389, 411–416, aspartate 500, and arginine 515 each bind ATP; these read GEP and DTWWQT. Residue serine 523 coordinates CoA. Residue arginine 526 coordinates ATP. The Mg(2+) site is built by valine 537, histidine 539, and valine 542. Arginine 584 is a CoA binding site. The residue at position 609 (lysine 609) is an N6-acetyllysine.

It belongs to the ATP-dependent AMP-binding enzyme family. The cofactor is Mg(2+). In terms of processing, acetylated. Deacetylation by the SIR2-homolog deacetylase activates the enzyme.

The enzyme catalyses acetate + ATP + CoA = acetyl-CoA + AMP + diphosphate. Functionally, catalyzes the conversion of acetate into acetyl-CoA (AcCoA), an essential intermediate at the junction of anabolic and catabolic pathways. AcsA undergoes a two-step reaction. In the first half reaction, AcsA combines acetate with ATP to form acetyl-adenylate (AcAMP) intermediate. In the second half reaction, it can then transfer the acetyl group from AcAMP to the sulfhydryl group of CoA, forming the product AcCoA. The sequence is that of Acetyl-coenzyme A synthetase from Agrobacterium fabrum (strain C58 / ATCC 33970) (Agrobacterium tumefaciens (strain C58)).